Consider the following 453-residue polypeptide: DDB1- and CUL4-associated factor 12 (453 aa).

The segment covering 1–12 has biased composition (basic residues); that stretch reads MARKAVSRKRKA. Residues 1–26 form a disordered region; it reads MARKAVSRKRKAPASPGAGSDAQGQQ. Positions 1 to 38 are required for nuclear location and interaction with MOV10; sequence MARKAVSRKRKAPASPGAGSDAQGQQFGWDHTLHKRKR. Residue Ser-15 is modified to Phosphoserine. WD repeat units lie at residues 138-178, 182-220, 250-289, and 338-375; these read QQGC…PVCV, GHKD…LTKS, PDNC…SKLL, and ERGS…FLEE.

Belongs to the WD repeat DCAF12 family. In terms of assembly, component of the DCX(DCAF12) E3 ubiquitin ligase complex, at least composed of CUL4 (CUL4A or CUL4B), DDB1, DCAF12 and RBX1.

The protein resides in the cytoplasm. It is found in the cytoskeleton. Its subcellular location is the microtubule organizing center. It localises to the centrosome. The protein localises to the nucleus. The protein operates within protein modification; protein ubiquitination. Functionally, substrate-recognition component of a DCX (DDB1-CUL4-X-box) E3 ubiquitin-protein ligase complex of the DesCEND (destruction via C-end degrons) pathway, which recognizes a C-degron located at the extreme C terminus of target proteins, leading to their ubiquitination and degradation. The C-degron recognized by the DesCEND pathway is usually a motif of less than ten residues and can be present in full-length proteins, truncated proteins or proteolytically cleaved forms. The DCX(DCAF12) complex specifically recognizes proteins with a diglutamate (Glu-Glu) at the C-terminus, such as MAGEA3, MAGEA6 and CCT5, leading to their ubiquitination and degradation. Ubiquitination of MAGEA3, MAGEA6 by DCX(DCAF12) complex is required for starvation-induced autophagy. Also directly recognizes the C-terminal glutamate-leucine (Glu-Leu) degron as an alternative degron in proteins such as MOV10, leading to their ubiquitination and degradation. Controls the protein level of MOV10 during spermatogenesis and in T cells, especially after their activation. This Macaca fascicularis (Crab-eating macaque) protein is DDB1- and CUL4-associated factor 12 (DCAF12).